Consider the following 61-residue polypeptide: Photosystem II reaction center protein K (61 aa).

A propeptide spanning residues 1–24 is cleaved from the precursor; sequence MLNTFSLIGICLNSTLYSSSFFFG. Residues 36-56 traverse the membrane as a helical segment; that stretch reads IVDIMPVIPLFFFLLAFVWQA.

This sequence belongs to the PsbK family. In terms of assembly, PSII is composed of 1 copy each of membrane proteins PsbA, PsbB, PsbC, PsbD, PsbE, PsbF, PsbH, PsbI, PsbJ, PsbK, PsbL, PsbM, PsbT, PsbX, PsbY, PsbZ, Psb30/Ycf12, at least 3 peripheral proteins of the oxygen-evolving complex and a large number of cofactors. It forms dimeric complexes.

It is found in the plastid. It localises to the chloroplast thylakoid membrane. Functionally, one of the components of the core complex of photosystem II (PSII). PSII is a light-driven water:plastoquinone oxidoreductase that uses light energy to abstract electrons from H(2)O, generating O(2) and a proton gradient subsequently used for ATP formation. It consists of a core antenna complex that captures photons, and an electron transfer chain that converts photonic excitation into a charge separation. In Solanum bulbocastanum (Wild potato), this protein is Photosystem II reaction center protein K.